The primary structure comprises 539 residues: Phosphoenolpyruvate carboxykinase (ATP) (539 aa).

Substrate contacts are provided by arginine 64, tyrosine 206, and lysine 212. ATP is bound by residues lysine 212, histidine 231, and 247-255 (GLSGTGKTT). Mn(2+)-binding residues include lysine 212 and histidine 231. Aspartate 268 contributes to the Mn(2+) binding site. Residues glutamate 296, arginine 332, 448–449 (RI), and threonine 454 each bind ATP. Arginine 332 contributes to the substrate binding site.

The protein belongs to the phosphoenolpyruvate carboxykinase (ATP) family. In terms of assembly, monomer. Mn(2+) is required as a cofactor.

The protein resides in the cytoplasm. The enzyme catalyses oxaloacetate + ATP = phosphoenolpyruvate + ADP + CO2. It functions in the pathway carbohydrate biosynthesis; gluconeogenesis. Functionally, involved in the gluconeogenesis. Catalyzes the conversion of oxaloacetate (OAA) to phosphoenolpyruvate (PEP) through direct phosphoryl transfer between the nucleoside triphosphate and OAA. This is Phosphoenolpyruvate carboxykinase (ATP) from Cronobacter sakazakii (strain ATCC BAA-894) (Enterobacter sakazakii).